Here is an 820-residue protein sequence, read N- to C-terminus: Probable ATP-dependent RNA helicase DDX23 (820 aa).

Positions 1–42 (MAGELADKKDRDASPSKEERKRSRTPDRERDRDRDRKSSPSK) are enriched in basic and acidic residues. The tract at residues 1-244 (MAGELADKKD…QKIREEKDKS (244 aa)) is disordered. 2 positions are modified to phosphoserine: Ser-14 and Ser-16. The span at 43-65 (DRKRHRSRDRRRGGSRSRSRSRS) shows a compositional bias: basic residues. Positions 66–105 (KSAERERRHKERERDKERDRNKKDRDRDKDGHRRDKDRKR) are enriched in basic and acidic residues. Residues Ser-107 and Ser-109 each carry the phosphoserine modification. Composition is skewed to basic and acidic residues over residues 112–137 (RGKD…DKKP), 147–226 (LLAK…RETN), and 233–244 (GRQKIREEKDKS). The Q motif signature appears at 391–419 (RSWKDSSLPPHILEVIDKCGYKEPTPIQR). A Helicase ATP-binding domain is found at 422–627 (IPIGLQNRDI…RSYLRRPAVV (206 aa)). 435–442 (AETGSGKT) is an ATP binding site. Residues 549–552 (DEAD) carry the DEAD box motif. The Helicase C-terminal domain occupies 651–799 (KRKKLLAILE…SCPPELANHP (149 aa)). Glycyl lysine isopeptide (Lys-Gly) (interchain with G-Cter in SUMO2) cross-links involve residues Lys-686 and Lys-811.

Belongs to the DEAD box helicase family. DDX23/PRP28 subfamily. The phosphorylated form (by SRPK2) is a component of the U4/U6-U5 tri-snRNP complex composed of the U4, U6 and U5 snRNAs and at least PRPF3, PRPF4, PRPF6, PRPF8, PRPF31, SNRNP200, TXNL4A, WDR57, SNRNP40, DDX23, CD2BP2, PPIH, SNU13, EFTUD2, SART1 and USP39. Identified in the spliceosome C complex. Interacts with ERBB4. Interacts with ERCC6. In terms of processing, in vitro phosphorylated by CLK1 and U1 snRNP-associated protein kinase. Phosphorylated by SRPK2 and this phosphorylation is required for its association with the tri-snRNP (U4/U6-U5 tri-small nuclear ribonucleoproteins) and subsequent spliceosomal B complex formation. May be phosphorylated by SRPK2 on Ser residues in the SR domain; the phosphorylation is required for the removal of inappropriate R-loops during transcription.

It is found in the nucleus. Its subcellular location is the chromosome. It carries out the reaction ATP + H2O = ADP + phosphate + H(+). Its function is as follows. Involved in pre-mRNA splicing and its phosphorylated form (by SRPK2) is required for spliceosomal B complex formation. Independently of its spliceosome formation function, required for the suppression of incorrect R-loops formed during transcription; R-loops are composed of a DNA:RNA hybrid and the associated non-template single-stranded DNA. The sequence is that of Probable ATP-dependent RNA helicase DDX23 from Homo sapiens (Human).